The primary structure comprises 411 residues: Corticotropin-releasing factor receptor 2 (411 aa).

Residues 1 to 19 (MDAALLHSLLEANCSLALA) constitute a signal peptide (not cleaved). At 1–108 (MDAALLHSLL…EPILDDKQRK (108 aa)) the chain is on the extracellular side. N-linked (GlcNAc...) asparagine glycans are attached at residues N13, N41, N74, N86, and N94. 4 disulfides stabilise this stretch: C14/C50, C40/C83, W51/R77, and C64/C98. The helical transmembrane segment at 109-139 (YDLHYRIALVVNYLGHCVSVAALVAAFLLFL) threads the bilayer. Topologically, residues 140 to 146 (ALRSIRC) are cytoplasmic. The chain crosses the membrane as a helical span at residues 147 to 171 (LRNVIHWNLITTFILRNVMWFLLQL). Residues 172–185 (VDHEVHESNEVWCR) lie on the Extracellular side of the membrane. A disulfide bond links C184 and C254. Residues 186-214 (CITTIFNYFVVTNFFWMFVEGCYLHTAIV) traverse the membrane as a helical segment. The Cytoplasmic portion of the chain corresponds to 215–221 (MTYSTER). The helical transmembrane segment at 222–249 (LRKCLFLFIGWCIPFPIIVAWAIGKLYY) threads the bilayer. Over 250 to 265 (ENEQCWFGKEPGDLVD) the chain is Extracellular. The helical transmembrane segment at 266–291 (YIYQGPIILVLLINFVFLFNIVRILM) threads the bilayer. The Cytoplasmic segment spans residues 292–302 (TKLRASTTSET). The helical transmembrane segment at 303–327 (IQYRKAVKATLVLLPLLGITYMLFF) threads the bilayer. Residues 328–334 (VNPGEDD) lie on the Extracellular side of the membrane. Residues 335 to 364 (LSQIMFIYFNSFLQSFQGFFVSVFYCFFNG) form a helical membrane-spanning segment. Residues 365–411 (EVRSAVRKRWHRWQDHHSLRVPMARAMSIPTSPTRISFHSIKQTAAV) lie on the Cytoplasmic side of the membrane.

The protein belongs to the G-protein coupled receptor 2 family. In terms of assembly, monomer. Interacts (via N-terminal extracellular domain) with CRF, UCN, UCN2 and UCN3. Has highest affinity for UCN, and considerably lower affinity for CRF, UNC2 and UCN3. An N-glycosylation site within the signal peptide impedes its proper cleavage and function.

It localises to the cell membrane. G-protein coupled receptor for CRH (corticotropin-releasing factor), UCN (urocortin), UCN2 and UCN3. Has high affinity for UCN. Ligand binding causes a conformation change that triggers signaling via guanine nucleotide-binding proteins (G proteins) and down-stream effectors, such as adenylate cyclase. Promotes the activation of adenylate cyclase, leading to increased intracellular cAMP levels. This is Corticotropin-releasing factor receptor 2 (CRHR2) from Homo sapiens (Human).